Here is a 116-residue protein sequence, read N- to C-terminus: Guanylin (116 aa).

The first 23 residues, 1 to 23, serve as a signal peptide directing secretion; that stretch reads MNACVLSVLCLLGALAVLVEGVT. The propeptide occupies 24 to 101; the sequence is VQDGDLSFPL…LQRLEAIAQD (78 aa). Intrachain disulfides connect C69–C83, C105–C113, and C108–C116.

This sequence belongs to the guanylin family. In terms of tissue distribution, localized in both crypts and villi in the small intestine and to superficial epithelial cells in the colon.

The protein localises to the secreted. Its function is as follows. Endogenous activator of intestinal guanylate cyclase. It stimulates this enzyme through the same receptor binding region as the heat-stable enterotoxins. The sequence is that of Guanylin (Guca2a) from Mus musculus (Mouse).